Consider the following 329-residue polypeptide: D-lactate dehydrogenase (329 aa).

NAD(+) contacts are provided by residues Lys-154 to Ile-155, Asp-174, Cys-205 to Pro-206, Asn-211, Thr-232 to Arg-234, and Asp-258. Residue Arg-234 is part of the active site. Residue Glu-263 is part of the active site. The active-site Proton donor is His-295.

Belongs to the D-isomer specific 2-hydroxyacid dehydrogenase family.

The enzyme catalyses (R)-lactate + NAD(+) = pyruvate + NADH + H(+). Functionally, fermentative lactate dehydrogenase. The sequence is that of D-lactate dehydrogenase (ldhA) from Escherichia coli (strain K12).